Reading from the N-terminus, the 86-residue chain is Exopolysaccharide production repressor protein (86 aa).

Residues 18-38 (FAVTLAASVFLQVVYFLSLLF) traverse the membrane as a helical segment. Residues 44-86 (TRESDRSIHSGTRQADQPQKRDRDKTEQSNVPKLDPRRKRRTP) form a disordered region. The span at 61–70 (PQKRDRDKTE) shows a compositional bias: basic and acidic residues.

The protein localises to the cell membrane. The protein operates within glycan metabolism; exopolysaccharide biosynthesis. In terms of biological role, inhibition of exopolysaccharide synthesis (EPS) and nodulation ability (NOD). The polypeptide is Exopolysaccharide production repressor protein (exoX) (Rhizobium leguminosarum bv. phaseoli).